The primary structure comprises 604 residues: M-phase inducer phosphatase cdc-25.1 (604 aa).

2 disordered regions span residues 33–67 (PKTL…DVDF) and 127–188 (EKRV…PFGD). Polar residues predominate over residues 44–54 (RDSGVSMTSCS). The segment covering 127–138 (EKRVMSERPTDN) has biased composition (basic and acidic residues). The Rhodanese domain maps to 305-413 (FDKKYIIVDC…LWSTAECRQI (109 aa)). 2 disordered regions span residues 443 to 464 (ASLK…CTRS) and 562 to 588 (DFPD…GGHQ).

Belongs to the MPI phosphatase family.

The enzyme catalyses O-phospho-L-tyrosyl-[protein] + H2O = L-tyrosyl-[protein] + phosphate. The polypeptide is M-phase inducer phosphatase cdc-25.1 (cdc-25.1) (Caenorhabditis elegans).